Reading from the N-terminus, the 540-residue chain is Probable protein kinase UbiB (540 aa).

A helical membrane pass occupies residues 24-44 (LLFEQPLLPWWLASLRLLMPW). Residues 126–494 (RFDVEPLASA…RRRQGDRWAL (369 aa)) form the Protein kinase domain. ATP is bound by residues 132 to 140 (LASASVAQV) and K154. The active-site Proton acceptor is the D289. The next 2 membrane-spanning stretches (helical) occupy residues 496–516 (LLGAGLLGGGAVLAAGAAEAA) and 518–538 (LAAPAAWPAWLMLAAGLYLIV).

This sequence belongs to the ABC1 family. UbiB subfamily.

Its subcellular location is the cell inner membrane. The protein operates within cofactor biosynthesis; ubiquinone biosynthesis [regulation]. In terms of biological role, is probably a protein kinase regulator of UbiI activity which is involved in aerobic coenzyme Q (ubiquinone) biosynthesis. The chain is Probable protein kinase UbiB from Pseudomonas putida (strain GB-1).